The sequence spans 238 residues: Sugar fermentation stimulation protein homolog (238 aa).

Belongs to the SfsA family.

The chain is Sugar fermentation stimulation protein homolog from Vibrio vulnificus (strain CMCP6).